The primary structure comprises 292 residues: Mitochondrial fission regulator 1-like (292 aa).

T30 carries the phosphothreonine modification. S41 carries the phosphoserine modification. S103 bears the Phosphoserine; by AMPK mark. A phosphoserine mark is found at S110, S224, and S225. At S238 the chain carries Phosphoserine; by AMPK. Residues S261 and S273 each carry the phosphoserine modification.

It belongs to the MTFR1 family. Post-translationally, phosphorylated by AMPK. Upon stress, phosphorylation at Ser-103 and Ser-238 by AMPK is sufficient to induce mitochondrial fragmentation.

Its subcellular location is the mitochondrion outer membrane. Mitochondrial protein required for adaptation of miochondrial dynamics to metabolic changes. Regulates mitochondrial morphology at steady state and mediates AMPK-dependent stress-induced mitochondrial fragmentation via the control of OPA1 levels. The sequence is that of Mitochondrial fission regulator 1-like from Homo sapiens (Human).